Here is a 208-residue protein sequence, read N- to C-terminus: MGYCSGRCTLIFICGMQLVCVLERQIFDFLGYQWAPILANFVHIIIVILGLFGTIQYRPRYVTGYAVWLVLWVTWNVFVICFYLEAGDLSKETDLILTFNISMHRSWWMENGPGCMVTSVTPAPDWAPEDHRYITVSGCFLDYQYIEVAHSSLQIVLALAGFIYACYVVRCITEEEDSFDFIGGFDSYGYQGPQKTSHLQLQPMYMSK.

The next 4 helical transmembrane spans lie at M1–E23, A35–I55, G64–L84, and V148–V168.

This sequence belongs to the NKAIN family. Interacts with ATP1B1. In terms of tissue distribution, detected in the brain only and specifically in neurons; expressed in multiple regions such as cerebral cortex, thalamus, cerebellum, olfactory bulb and brainstem, but not in the hippocampus.

It localises to the cell membrane. The chain is Sodium/potassium-transporting ATPase subunit beta-1-interacting protein 2 (Nkain2) from Mus musculus (Mouse).